A 393-amino-acid chain; its full sequence is uncharacterized protein (393 aa).

Residues 12-70 (APLLGSKIKLNIEKLAIGGAGVARHEGMVVFVPQAAPNEEILAEITLVKKNFMEARVVE) form the TRAM domain. Positions 83, 89, 92, and 166 each coordinate [4Fe-4S] cluster. Residues Gln-221, Tyr-250, Glu-273, and Asp-316 each contribute to the S-adenosyl-L-methionine site. Cys-343 acts as the Nucleophile in catalysis.

Belongs to the class I-like SAM-binding methyltransferase superfamily. RNA M5U methyltransferase family.

This is an uncharacterized protein from Bdellovibrio bacteriovorus (strain ATCC 15356 / DSM 50701 / NCIMB 9529 / HD100).